A 282-amino-acid chain; its full sequence is MRSIGFYSVLALYVGAHVTEDVDINFSLIGATGATYKTFIRNLRTKLTVGTPRVYDIPVLRNAAAGLARFQLVTLTNYNGESVTVALDVVNVYVVAYRAGNTAYFLADASTEANNVLFAGINHVRLPYGGNYDGLETAAGRISRENIELGFSEISSAIGNMFRHNPGTSVPRAFIVIIQTVSEAARFKYIEQRVSENVGTKFKPDPAFLSLQNAWGSLSEQIQIAQTRGGEFARPVELRTVSNTPTFVTNVNSPVVKGIALLLYFRVNVGTDNVFAMSLSTY.

A signal peptide spans 1–21; that stretch reads MRSIGFYSVLALYVGAHVTED. The N-linked (GlcNAc...) asparagine glycan is linked to Asn25. The active site involves Glu183.

Belongs to the ribosome-inactivating protein family. Type 1 RIP subfamily.

It catalyses the reaction Endohydrolysis of the N-glycosidic bond at one specific adenosine on the 28S rRNA.. In terms of biological role, ribosome-inactivating protein of type 1, inhibits protein synthesis in animal cells. The protein is Ribosome-inactivating protein bryodin II of Bryonia dioica (Red bryony).